Here is a 413-residue protein sequence, read N- to C-terminus: Tryptophan synthase beta chain 2 (413 aa).

At K107 the chain carries N6-(pyridoxal phosphate)lysine.

Belongs to the TrpB family. As to quaternary structure, tetramer of two alpha and two beta chains. Requires pyridoxal 5'-phosphate as cofactor.

It carries out the reaction (1S,2R)-1-C-(indol-3-yl)glycerol 3-phosphate + L-serine = D-glyceraldehyde 3-phosphate + L-tryptophan + H2O. It functions in the pathway amino-acid biosynthesis; L-tryptophan biosynthesis; L-tryptophan from chorismate: step 5/5. Its function is as follows. The beta subunit is responsible for the synthesis of L-tryptophan from indole and L-serine. This chain is Tryptophan synthase beta chain 2 (trpB2), found in Nostoc sp. (strain PCC 7120 / SAG 25.82 / UTEX 2576).